The sequence spans 562 residues: Acetolactate synthase isozyme 1 large subunit (562 aa).

Glu60 contributes to the thiamine diphosphate binding site. Residues Arg162, 264–285 (HGVR…LGAR), and 307–326 (DIDR…IQAD) each bind FAD. The interval 393 to 473 (QHQMWTAQAY…VKIILMNNEA (81 aa)) is thiamine pyrophosphate binding. Mg(2+) is bound by residues Asp444 and Asn471.

The protein belongs to the TPP enzyme family. In terms of assembly, dimer of large and small chains. It depends on Mg(2+) as a cofactor. Requires thiamine diphosphate as cofactor.

It carries out the reaction 2 pyruvate + H(+) = (2S)-2-acetolactate + CO2. It participates in amino-acid biosynthesis; L-isoleucine biosynthesis; L-isoleucine from 2-oxobutanoate: step 1/4. It functions in the pathway amino-acid biosynthesis; L-valine biosynthesis; L-valine from pyruvate: step 1/4. The protein is Acetolactate synthase isozyme 1 large subunit (ilvB) of Escherichia coli (strain K12).